The chain runs to 162 residues: MRHLVLIGFMGSGKSSLAQELGLALKLEVLDTDMIISERVGLSVRGIFEELGEDNFRMFEKNLIDELKTLKTPHIISTGGGIVMHDNLKGLGTTFYLKMDFETLIKRLNQKEREKRPLLNDLTQAKELFEKRQVLYEKNASFIIDARGGLNNSLKQVLQFIA.

ATP is bound at residue 11–16; that stretch reads GSGKSS. Residue S15 participates in Mg(2+) binding. Substrate is bound by residues D33, R57, and G80. An ATP-binding site is contributed by R116. Residue R132 coordinates substrate.

This sequence belongs to the shikimate kinase family. In terms of assembly, monomer. Requires Mg(2+) as cofactor.

It is found in the cytoplasm. It carries out the reaction shikimate + ATP = 3-phosphoshikimate + ADP + H(+). It participates in metabolic intermediate biosynthesis; chorismate biosynthesis; chorismate from D-erythrose 4-phosphate and phosphoenolpyruvate: step 5/7. In terms of biological role, catalyzes the specific phosphorylation of the 3-hydroxyl group of shikimic acid using ATP as a cosubstrate. In Helicobacter pylori (strain Shi470), this protein is Shikimate kinase.